We begin with the raw amino-acid sequence, 128 residues long: uncharacterized protein (128 aa).

This is an uncharacterized protein from Bacillus subtilis (strain 168).